The sequence spans 198 residues: MAEVRARVDFKVGAKSNIDAEILSFRGLKTDKEHVAVIFKQADQTQDTPLVRMHSECLTGDVFHSSRCDCGEQLEETIQRMGESGGVILYLRQEGRGIGLYNKIDAYRLQSQGMNTYEANNHLGFDDDLRDFTEAAQMLEALGIKKIRLVTNNPKKIRELAEYGIEIVEVVNTSAHIKDGNENYLRAKVSHGKHNLKV.

52 to 56 (RMHSE) lines the GTP pocket. Cysteine 57, cysteine 68, and cysteine 70 together coordinate Zn(2+). GTP-binding positions include glutamine 73, 94–96 (EGR), and threonine 116. Aspartate 128 acts as the Proton acceptor in catalysis. Residue arginine 130 is the Nucleophile of the active site. GTP contacts are provided by threonine 151 and lysine 156.

It belongs to the GTP cyclohydrolase II family. It depends on Zn(2+) as a cofactor.

It carries out the reaction GTP + 4 H2O = 2,5-diamino-6-hydroxy-4-(5-phosphoribosylamino)-pyrimidine + formate + 2 phosphate + 3 H(+). It participates in cofactor biosynthesis; riboflavin biosynthesis; 5-amino-6-(D-ribitylamino)uracil from GTP: step 1/4. Its function is as follows. Catalyzes the conversion of GTP to 2,5-diamino-6-ribosylamino-4(3H)-pyrimidinone 5'-phosphate (DARP), formate and pyrophosphate. This is GTP cyclohydrolase-2 from Vibrio parahaemolyticus serotype O3:K6 (strain RIMD 2210633).